A 662-amino-acid chain; its full sequence is Leucine aminopeptidase 2 (662 aa).

Residues 178–180 (QLE) and 304–309 (PYGGME) contribute to the a peptide site. His-333 contacts Zn(2+). The active-site Proton acceptor is the Glu-334. Residues His-337 and Glu-356 each coordinate Zn(2+). The active-site Proton donor is Tyr-422.

It belongs to the peptidase M1 family. Requires Zn(2+) as cofactor.

The protein localises to the cytoplasm. Its subcellular location is the nucleus. It catalyses the reaction an epoxide + H2O = an ethanediol. Aminopeptidase that preferentially cleaves di- and tripeptides. Also has low epoxide hydrolase activity (in vitro). Can hydrolyze the epoxide leukotriene LTA(4) but it forms preferentially 5,6-dihydroxy-7,9,11,14-eicosatetraenoic acid rather than the cytokine leukotriene B(4) as the product compared to the homologous mammalian enzyme (in vitro). This is Leucine aminopeptidase 2 from Kluyveromyces lactis (strain ATCC 8585 / CBS 2359 / DSM 70799 / NBRC 1267 / NRRL Y-1140 / WM37) (Yeast).